A 110-amino-acid polypeptide reads, in one-letter code: Flagellar hook-basal body complex protein FliE (110 aa).

This sequence belongs to the FliE family.

The protein localises to the bacterial flagellum basal body. In Bordetella petrii (strain ATCC BAA-461 / DSM 12804 / CCUG 43448), this protein is Flagellar hook-basal body complex protein FliE.